We begin with the raw amino-acid sequence, 235 residues long: Protein CIST1 (235 aa).

Residues 1 to 31 form the signal peptide; it reads MASSQPPLPPPPPPLLLLALLLLLKVSDTSS. 2 stretches are compositionally biased toward low complexity: residues 28–61 and 76–110; these read DTSS…SSPT and STSH…SQPE. Residues 28-159 are disordered; it reads DTSSSVSTAT…TGPPSVSLAT (132 aa). The Extracellular segment spans residues 32-184; sequence SVSTATSTAS…GVPRLHRNPG (153 aa). A glycan (N-linked (GlcNAc...) asparagine) is linked at Asn-45. Positions 114-136 are enriched in polar residues; that stretch reads HPSSGSPSSEHTVTSPSLGSVSL. A helical transmembrane segment spans residues 185–205; sequence VVVAVCLLVSALLIGGAIMAV. Residues 206-235 are Cytoplasmic-facing; that stretch reads RRCHNGVSEFQKLDEGLVSRRSSSAHHTLP.

As to expression, highly expressed in large intestine, small intestine, rumen, and kidney tissues.

It is found in the membrane. The sequence is that of Protein CIST1 (CIST1) from Bos taurus (Bovine).